The following is a 154-amino-acid chain: Superoxide dismutase [Cu-Zn] (154 aa).

Residues His47, His49, and His64 each contribute to the Cu cation site. Cys58 and Cys147 are oxidised to a cystine. 4 residues coordinate Zn(2+): His64, His72, His81, and Asp84. His121 contributes to the Cu cation binding site. A compositionally biased stretch (basic and acidic residues) spans 125 to 137 (DDLGRGGNEESKK). The tract at residues 125–147 (DDLGRGGNEESKKTGNAGPRPAC) is disordered. Residue Arg144 participates in substrate binding.

Belongs to the Cu-Zn superoxide dismutase family. Homodimer. Cu cation serves as cofactor. The cofactor is Zn(2+).

It localises to the cytoplasm. The catalysed reaction is 2 superoxide + 2 H(+) = H2O2 + O2. Functionally, destroys radicals which are normally produced within the cells and which are toxic to biological systems. This chain is Superoxide dismutase [Cu-Zn], found in Aspergillus niger (strain ATCC MYA-4892 / CBS 513.88 / FGSC A1513).